Reading from the N-terminus, the 149-residue chain is Nucleoside diphosphate kinase (149 aa).

Residues lysine 9, phenylalanine 57, arginine 85, threonine 91, arginine 102, and asparagine 112 each contribute to the ATP site. Histidine 115 serves as the catalytic Pros-phosphohistidine intermediate.

This sequence belongs to the NDK family. The cofactor is Mg(2+).

The protein localises to the cytoplasm. The enzyme catalyses a 2'-deoxyribonucleoside 5'-diphosphate + ATP = a 2'-deoxyribonucleoside 5'-triphosphate + ADP. It catalyses the reaction a ribonucleoside 5'-diphosphate + ATP = a ribonucleoside 5'-triphosphate + ADP. Its function is as follows. Major role in the synthesis of nucleoside triphosphates other than ATP. The ATP gamma phosphate is transferred to the NDP beta phosphate via a ping-pong mechanism, using a phosphorylated active-site intermediate. This Methanosarcina barkeri (strain Fusaro / DSM 804) protein is Nucleoside diphosphate kinase.